Reading from the N-terminus, the 489-residue chain is Mitochondrial distribution and morphology protein 10 (489 aa).

The protein belongs to the MDM10 family. As to quaternary structure, component of the ER-mitochondria encounter structure (ERMES) or MDM complex, composed of MMM1, MDM10, MDM12 and MDM34. Associates with the mitochondrial outer membrane sorting assembly machinery SAM(core) complex.

It is found in the mitochondrion outer membrane. In terms of biological role, component of the ERMES/MDM complex, which serves as a molecular tether to connect the endoplasmic reticulum and mitochondria. Components of this complex are involved in the control of mitochondrial shape and protein biogenesis and may function in phospholipid exchange. MDM10 is involved in the late assembly steps of the general translocase of the mitochondrial outer membrane (TOM complex). Functions in the TOM40-specific route of the assembly of outer membrane beta-barrel proteins, including the association of TOM40 with the receptor TOM22 and small TOM proteins. Can associate with the SAM(core) complex as well as the MDM12-MMM1 complex, both involved in late steps of the major beta-barrel assembly pathway, that is responsible for biogenesis of all outer membrane beta-barrel proteins. May act as a switch that shuttles between both complexes and channels precursor proteins into the TOM40-specific pathway. Plays a role in mitochondrial morphology and in the inheritance of mitochondria. This is Mitochondrial distribution and morphology protein 10 from Arthroderma otae (strain ATCC MYA-4605 / CBS 113480) (Microsporum canis).